The sequence spans 212 residues: Claudin-7-A (212 aa).

Topologically, residues 1-7 (MANSGVQ) are cytoplasmic. Residues 8 to 28 (LLGFGLSLIGIIGLIVGTILP) form a helical membrane-spanning segment. The Extracellular segment spans residues 29-81 (QWKMSAYVGDSIITAVATYQGLWMSCAFQSTGQLQCKIYDSILQLDSDLQATR). A helical membrane pass occupies residues 82–102 (ALMIVGIIVSIAGLGVASIGM). Residues 103 to 119 (KCTTCGADDKVRKTRTA) are Cytoplasmic-facing. Residues 120 to 140 (MTGGIILLVGALCAVVACSWF) traverse the membrane as a helical segment. The Extracellular portion of the chain corresponds to 141 to 162 (AHNVIRAFYNPFTPVNTKFEFG). The chain crosses the membrane as a helical span at residues 163 to 183 (AAIFIAWGGSFLDVLGGAMLA). The Cytoplasmic segment spans residues 184-212 (ASCPRSKQVSKYPKSNSTRSANGSNKEYV). Positions 191–212 (QVSKYPKSNSTRSANGSNKEYV) are disordered.

This sequence belongs to the claudin family.

It is found in the cell junction. The protein resides in the tight junction. Its subcellular location is the cell membrane. Its function is as follows. Plays a major role in tight junction-specific obliteration of the intercellular space. The chain is Claudin-7-A from Danio rerio (Zebrafish).